A 268-amino-acid polypeptide reads, in one-letter code: DNA repair protein RecO (268 aa).

The protein belongs to the RecO family.

In terms of biological role, involved in DNA repair and RecF pathway recombination. The sequence is that of DNA repair protein RecO from Mycobacterium leprae (strain Br4923).